The following is a 143-amino-acid chain: Transmembrane protein 80 (143 aa).

4 helical membrane-spanning segments follow: residues 21 to 41 (MLFY…LLMI), 55 to 75 (LVLD…RLYL), 99 to 119 (ALLS…DWAL), and 121 to 141 (ATLL…IAAF).

The protein resides in the membrane. The protein localises to the cell projection. Its subcellular location is the cilium. The protein is Transmembrane protein 80 of Homo sapiens (Human).